Here is a 242-residue protein sequence, read N- to C-terminus: MSGFFITATDTEVGKTVVAGALAGVFRELGYNIGVYKALQSGHVASNPEGDAARLKVLSGVPTKEDEICPYSIEEPLAPRLAMKRAGRAVTLKDIIHHYNERLKEFNSLFVEGAGGLAVPYTEDALVIDFAKELQLPLIVVARPTLGTVNHTVLTIAYAKANGLTVAGVILSGCKECEMERVQENKVMIEELSGVPVLGLLPFFEGEFTKEEVLESAKEYIMISKLEEFIRNESTVAHTSSN.

E12–V17 is an ATP binding site. T16 is a Mg(2+) binding site. The active site involves K37. S41 is a binding site for substrate. ATP is bound by residues D51 and E112–G115. Mg(2+) is bound by residues D51 and E112.

This sequence belongs to the dethiobiotin synthetase family. As to quaternary structure, homodimer. Mg(2+) is required as a cofactor.

Its subcellular location is the cytoplasm. It carries out the reaction (7R,8S)-7,8-diammoniononanoate + CO2 + ATP = (4R,5S)-dethiobiotin + ADP + phosphate + 3 H(+). The protein operates within cofactor biosynthesis; biotin biosynthesis; biotin from 7,8-diaminononanoate: step 1/2. In terms of biological role, catalyzes a mechanistically unusual reaction, the ATP-dependent insertion of CO2 between the N7 and N8 nitrogen atoms of 7,8-diaminopelargonic acid (DAPA, also called 7,8-diammoniononanoate) to form a ureido ring. The polypeptide is ATP-dependent dethiobiotin synthetase BioD (Bacillus thuringiensis subsp. konkukian (strain 97-27)).